The sequence spans 593 residues: Arginine--tRNA ligase (593 aa).

Positions 138–148 match the 'HIGH' region motif; it reads ANPTGPLHVGH.

This sequence belongs to the class-I aminoacyl-tRNA synthetase family. In terms of assembly, monomer.

It localises to the cytoplasm. The enzyme catalyses tRNA(Arg) + L-arginine + ATP = L-arginyl-tRNA(Arg) + AMP + diphosphate. The chain is Arginine--tRNA ligase from Burkholderia cenocepacia (strain ATCC BAA-245 / DSM 16553 / LMG 16656 / NCTC 13227 / J2315 / CF5610) (Burkholderia cepacia (strain J2315)).